The following is a 2035-amino-acid chain: Proline-rich protein 12 (2035 aa).

4 disordered regions span residues 210-280 (GGGV…ERAL), 292-311 (RPASAQPPPPPPPAHSLQHY), 329-584 (CSPL…GAPG), and 645-685 (QAPS…GTPY). Residues 223–240 (QTPPYRPGPPDPPPPPRH) are compositionally biased toward pro residues. A compositionally biased stretch (low complexity) spans 249–261 (ASSSAATAAEPSS). Residues 296-305 (AQPPPPPPPA) are compositionally biased toward pro residues. Phosphoserine occurs at positions 330 and 338. Low complexity predominate over residues 338 to 364 (SPGAGEPSKGGPSGATAGAAGRATGPE). Positions 365 to 377 (TAGGGAAGGGGGY) are enriched in gly residues. Composition is skewed to low complexity over residues 408 to 429 (STATPKCQSLGGPAAAYAAGKA) and 437 to 455 (SQAYSPGQPQGLLGPQAYG). Positions 476 to 487 (PPQPPSGPPPPG) are enriched in pro residues. Composition is skewed to polar residues over residues 490 to 501 (TCQSYSPDQLQG) and 520 to 534 (GLPTASPSLSYSTGH). Residues 540–555 (GHGGGWGPSSLGGGGE) show a composition bias toward gly residues. Ser648 carries the post-translational modification Phosphoserine. Gly residues predominate over residues 670–681 (GLGGSGGAGGAP). Thr735 bears the Phosphothreonine mark. Disordered regions lie at residues 755–844 (AFLQ…PLQL), 851–870 (HGLEPTAPSPRLRPEESLEP), 879–920 (GALE…APRF), and 946–1061 (EMFG…CSTK). Over residues 830–841 (PQPPPPPPPPMP) the composition is skewed to pro residues. Ser859 is subject to Phosphoserine. Over residues 1031–1046 (SAPPPPPPPPPPPPVS) the composition is skewed to pro residues. A phosphoserine mark is found at Ser1070 and Ser1128. Disordered stretches follow at residues 1112-1244 (RRLP…DHNS), 1288-1355 (PLYQ…SPCK), 1367-1567 (TLPS…GEGI), and 1662-1839 (HRPP…PGRL). Positions 1190–1199 (KPRGRGRGRG) are enriched in basic residues. Residues 1200–1214 (RKAEEMGGTRLEPLK) are compositionally biased toward basic and acidic residues. An N6-acetyllysine modification is found at Lys1214. Thr1295 carries the post-translational modification Phosphothreonine. Ser1299 bears the Phosphoserine mark. Residues 1314-1329 (QPPPPTVPTVPHPAPS) show a composition bias toward pro residues. Residues Ser1372, Ser1373, and Ser1378 each carry the phosphoserine modification. Over residues 1449 to 1529 (PPTPPPAPTP…PPEEPPAPSP (81 aa)) the composition is skewed to pro residues. A compositionally biased stretch (basic and acidic residues) spans 1535-1547 (PDARPLHLAKKQE). Thr1555 is modified (phosphothreonine). A Phosphoserine modification is found at Ser1562. Residues 1698–1709 (ETPEKMTSEKPP) are compositionally biased toward basic and acidic residues. Residue Thr1699 is modified to Phosphothreonine. Over residues 1710–1730 (EPAPEPAVPEPPAPEKPSPPR) the composition is skewed to pro residues. The span at 1731–1768 (PVEKEKEKEKEKEKEKERVTRPLRSERATSGRQMRTDR) shows a compositional bias: basic and acidic residues. Positions 1769–1779 (SLATGQSTTSR) are enriched in polar residues. Over residues 1817–1828 (SSSDSESSPGAP) the composition is skewed to low complexity. Ser1924 bears the Phosphoserine mark.

As to expression, expressed in brain.

It is found in the nucleus. The protein resides in the postsynaptic density. It localises to the synapse. Its subcellular location is the synaptosome. The chain is Proline-rich protein 12 from Mus musculus (Mouse).